The sequence spans 200 residues: Dephospho-CoA kinase (200 aa).

Residues 4–200 (VIGLTGGIAS…VILKKWNIID (197 aa)) form the DPCK domain. 12 to 17 (ASGKST) lines the ATP pocket.

This sequence belongs to the CoaE family.

It localises to the cytoplasm. The catalysed reaction is 3'-dephospho-CoA + ATP = ADP + CoA + H(+). It functions in the pathway cofactor biosynthesis; coenzyme A biosynthesis; CoA from (R)-pantothenate: step 5/5. In terms of biological role, catalyzes the phosphorylation of the 3'-hydroxyl group of dephosphocoenzyme A to form coenzyme A. This chain is Dephospho-CoA kinase, found in Bacillus cereus (strain ATCC 14579 / DSM 31 / CCUG 7414 / JCM 2152 / NBRC 15305 / NCIMB 9373 / NCTC 2599 / NRRL B-3711).